The following is a 2176-amino-acid chain: Protein sidekick-2 (2176 aa).

An N-terminal signal peptide occupies residues 1–24 (MFSSMWRLPLWTLLALHRIHSAGA). The Extracellular segment spans residues 25–1936 (QDDVPPYFKT…ASPFYEEWWF (1912 aa)). Ig-like C2-type domains are found at residues 30 to 112 (PYFK…TEVQ), 117 to 204 (GSFE…QPIT), 219 to 298 (PTII…SSVA), 312 to 402 (PQFV…LAVT), 406 to 495 (PNIT…ADLV), and 500 to 589 (TRIT…AHLR). A disulfide bridge connects residues cysteine 52 and cysteine 95. The N-linked (GlcNAc...) asparagine glycan is linked to asparagine 197. 4 cysteine pairs are disulfide-bonded: cysteine 241/cysteine 288, cysteine 334/cysteine 384, cysteine 427/cysteine 479, and cysteine 521/cysteine 573. Fibronectin type-III domains are found at residues 596 to 692 (APEH…LPEE), 697 to 793 (PPQN…TLQG), 798 to 897 (PPGN…THED), 901 to 995 (PVGH…VPPE), 999 to 1098 (APTN…TLQA), 1103 to 1201 (APAN…TRES), 1206 to 1303 (GPTN…TLDD), 1307 to 1401 (PPMG…TEKR), 1406 to 1503 (PPSK…TLQA), 1508 to 1625 (APTI…VGEA), 1630 to 1726 (APQN…TQQA), 1730 to 1825 (APGS…TGPG), and 1828 to 1930 (APGP…ASPF). An N-linked (GlcNAc...) asparagine glycan is attached at asparagine 747. Residues asparagine 940 and asparagine 952 are each glycosylated (N-linked (GlcNAc...) asparagine). N-linked (GlcNAc...) asparagine glycosylation occurs at asparagine 1106. Asparagine 1592 carries an N-linked (GlcNAc...) asparagine glycan. The tract at residues 1712–1734 (DGPRSTPTRGQTQQAAPSAPGSV) is disordered. A compositionally biased stretch (polar residues) spans 1716–1727 (STPTRGQTQQAA). Residues 1937–1957 (LVVIALVGLIFILLLVFVLII) form a helical membrane-spanning segment. Residues 1958 to 2176 (RGQSKKYSKK…APIAGFSSFV (219 aa)) lie on the Cytoplasmic side of the membrane. Disordered regions lie at residues 2013–2032 (GLYT…YSDE), 2043–2070 (AESS…VDTN), and 2102–2176 (QAYS…SSFV). Polar residues-rich tracts occupy residues 2044 to 2070 (ESSS…VDTN) and 2119 to 2129 (VPNSNSTQQGS). The PDZ-binding motif lies at 2170-2176 (AGFSSFV).

The protein belongs to the sidekick family. Homodimer; mediates homophilic interactions to promote cell adhesion. Interacts (via PDZ-binding motif) with MAGI1, MAGI2, DLG2, DLG3 and DLG4. In terms of tissue distribution, expressed in retinal ganglion cells (RGCs) that form synapses in distinct inner plexiform layer (IPL) sublaminae. Specifically expressed in specific subsets of retinal ganglion cells (RGCs), named W3B-RGCs, that specifically respond when the timing of the movement of a small object differs from that of the background, but not when they coincide (at protein level). Also present in excitatory amacrine cell type called VG3-ACs, that provide strong and selective input W3B-RGCs (at protein level). Expressed at low levels in the glomeruli.

It is found in the cell membrane. The protein resides in the synapse. Its function is as follows. Adhesion molecule that promotes lamina-specific synaptic connections in the retina and is specifically required for the formation of neuronal circuits that detect motion. Acts by promoting formation of synapses between two specific retinal cell types: the retinal ganglion cells W3B-RGCs and the excitatory amacrine cells VG3-ACs. Formation of synapses between these two cells plays a key role in detection of motion. Promotes synaptic connectivity via homophilic interactions. The sequence is that of Protein sidekick-2 from Mus musculus (Mouse).